A 342-amino-acid chain; its full sequence is Probable endoglucanase (342 aa).

Positions 1–20 (MSVMAAMGGAQVLSSTGAFA) are cleaved as a signal peptide. Catalysis depends on glutamate 57, which acts as the Proton donor. Residue aspartate 114 is the Nucleophile of the active site.

It belongs to the glycosyl hydrolase 8 (cellulase D) family.

It localises to the secreted. It carries out the reaction Endohydrolysis of (1-&gt;4)-beta-D-glucosidic linkages in cellulose, lichenin and cereal beta-D-glucans.. Enzyme capable of hydrolyzing carboxy-methyl-cellulose (CMC). This is Probable endoglucanase (cmcAX) from Novacetimonas hansenii (Komagataeibacter hansenii).